A 227-amino-acid chain; its full sequence is Probable septum site-determining protein MinC (227 aa).

The protein belongs to the MinC family. In terms of assembly, interacts with MinD and FtsZ.

Its function is as follows. Cell division inhibitor that blocks the formation of polar Z ring septums. Rapidly oscillates between the poles of the cell to destabilize FtsZ filaments that have formed before they mature into polar Z rings. Prevents FtsZ polymerization. The protein is Probable septum site-determining protein MinC of Clostridioides difficile (strain 630) (Peptoclostridium difficile).